The primary structure comprises 293 residues: L-ornithine N(alpha)-acyltransferase (293 aa).

This sequence belongs to the acetyltransferase family. OlsB subfamily.

It catalyses the reaction a (3R)-hydroxyacyl-[ACP] + L-ornithine = a lyso-ornithine lipid + holo-[ACP] + H(+). It functions in the pathway lipid metabolism. Its function is as follows. Catalyzes the first step in the biosynthesis of ornithine lipids, which are phosphorus-free membrane lipids. Catalyzes the 3-hydroxyacyl-acyl carrier protein-dependent acylation of ornithine to form lyso-ornithine lipid (LOL). The chain is L-ornithine N(alpha)-acyltransferase from Agrobacterium fabrum (strain C58 / ATCC 33970) (Agrobacterium tumefaciens (strain C58)).